The primary structure comprises 926 residues: Neurofilament medium polypeptide (926 aa).

Over residues 1-10 the composition is skewed to polar residues; the sequence is MSYTLDSLGN. Disordered regions lie at residues 1 to 51 and 79 to 102; these read MSYT…VSSS and QSSS…SNEK. At serine 2 the chain carries N-acetylserine. Residues 2–104 are head; sequence SYTLDSLGNP…KLSRSNEKEQ (103 aa). Residues 21–44 show a composition bias toward low complexity; the sequence is RSSFSRISGSPSSGFRSQSWSRGS. A Phosphoserine modification is found at serine 30. Position 42 is an omega-N-methylarginine (arginine 42). Threonine 47 carries an O-linked (GlcNAc) threonine glycan. Serine 99 is modified (phosphoserine). The region spanning 101-412 is the IF rod domain; the sequence is EKEQIQGLND…KLLEGEETRF (312 aa). Residues 105 to 136 are coil 1A; it reads IQGLNDRFAGYIEKVHYLEQQNKEIEAEIQAL. The interval 137-149 is linker 1; that stretch reads RQKQASHAQLGDA. The segment at 150–248 is coil 1B; that stretch reads YDQEIRELRA…EEEVADLLAQ (99 aa). Phosphoserine is present on serine 226. A linker 12 region spans residues 249-265; it reads IQASHITVERKDYLKTD. Residues 266 to 287 form a coil 2A region; the sequence is ISTALKEIRSQLESHSDQNMHQ. The interval 288–291 is linker 2; it reads AEEW. The interval 292-412 is coil 2B; sequence FKCRYAKLTE…KLLEGEETRF (121 aa). Tyrosine 320 carries the phosphotyrosine modification. 5 positions are modified to phosphoserine: serine 346, serine 418, serine 430, serine 468, and serine 484. The interval 413–926 is tail; the sequence is STFAGSITGP…AIVKEVTQSD (514 aa). The segment at 487 to 860 is disordered; it reads EEVKEEEAEE…EKKGGDKSEE (374 aa). Over residues 490–507 the composition is skewed to acidic residues; that stretch reads KEEEAEEKEEKEEAEEEV. Repeat 1 spans residues 512-516; sequence KSPVK. The segment at 512-698 is 17 X 5 AA approximate tandem repeats of K-S-P-[TVEA]-[AKETP]; sequence KSPVKATAPE…KSPAPKSPVE (187 aa). Residue serine 513 is modified to Phosphoserine. The span at 523-543 shows a compositional bias: acidic residues; that stretch reads KEEEGEKEEEEGQEEEEEEEE. Residues 544–563 show a composition bias toward basic and acidic residues; it reads AAKSDQAEEGGSEKEGSSEK. Phosphoserine is present on residues serine 547, serine 555, serine 560, and serine 561. Residues 564–584 are compositionally biased toward acidic residues; sequence EEGEQEEEGETEAEGEGEEAA. Threonine 574 carries the phosphothreonine modification. A compositionally biased stretch (basic and acidic residues) spans 585 to 619; it reads AEAKEEKKMEEKAEEVAPKEELAAEAKVEKPEKAK. 16 repeat units span residues 619–623, 624–628, 629–633, 634–638, 639–643, 644–648, 649–653, 654–658, 659–663, 664–668, 669–673, 674–678, 679–683, 684–688, 689–693, and 694–698. Threonine 628 carries the post-translational modification Phosphothreonine. Phosphoserine is present on residues serine 630, serine 635, and serine 640. The residue at position 647 (threonine 647) is a Phosphothreonine. A phosphoserine mark is found at serine 650 and serine 655. Phosphoserine is present on residues serine 665 and serine 670. Over residues 673-692 the composition is skewed to low complexity; that stretch reads AKSPTAKSPTAKSPAAKSPA. A Phosphothreonine modification is found at threonine 677. A phosphoserine mark is found at serine 680, serine 685, serine 690, serine 695, serine 727, serine 751, serine 757, serine 771, serine 831, and serine 847. 3 stretches are compositionally biased toward basic and acidic residues: residues 696–764, 771–811, and 826–838; these read PVEE…EEVP, SPEK…KEDI, and TKEK…EEKG. The segment covering 849-860 has biased composition (basic and acidic residues); sequence GDEKKGGDKSEE.

As to quaternary structure, forms heterodimers with NEFL; which can further hetero-oligomerize (in vitro). Forms heterodimers with INA (in vitro). Phosphorylated on a number of serine residues in the repeated K-S-P tripeptide motif. Phosphorylation of NFH may result in the formation of interfilament cross-links that are important in the maintenance of axonal caliber. In terms of processing, phosphorylation seems to play a major role in the functioning of the larger neurofilament polypeptides (NF-M and NF-H), the levels of phosphorylation being altered developmentally and coincidentally with a change in the neurofilament function. Post-translationally, phosphorylated in the head and rod regions by the PKC kinase PKN1, leading to the inhibition of polymerization.

It localises to the cytoplasm. Its subcellular location is the cytoskeleton. It is found in the cell projection. The protein localises to the axon. In terms of biological role, neurofilaments usually contain three intermediate filament proteins: NEFL, NEFM, and NEFH which are involved in the maintenance of neuronal caliber. May additionally cooperate with the neuronal intermediate filament proteins PRPH and INA to form neuronal filamentous networks. This is Neurofilament medium polypeptide (NEFM) from Bos taurus (Bovine).